The following is a 223-amino-acid chain: Neurotrophic factor BDNF precursor form (223 aa).

The signal sequence occupies residues 1-5 (SCMKA). Positions 6-114 (APMKEVGVRG…AANMSXRVRR (109 aa)) are excised as a propeptide. Asn-107 carries N-linked (GlcNAc...) asparagine glycosylation. 2 disulfides stabilise this stretch: Cys-127–Cys-194 and Cys-172–Cys-223.

It belongs to the NGF-beta family.

Its subcellular location is the secreted. Functionally, promotes the survival of neuronal populations that are all located either in the central nervous system or directly connected to it. The sequence is that of Neurotrophic factor BDNF precursor form (BDNF) from Eryx jayakari (Arabian sand boa).